We begin with the raw amino-acid sequence, 446 residues long: Glutamyl-tRNA reductase 2 (446 aa).

Substrate is bound by residues 53-56 (TCNR), Ser-105, 110-112 (EQQ), and Gln-116. The active-site Nucleophile is Cys-54. Position 185–190 (185–190 (GAGKMG)) interacts with NADP(+). Residues 409-446 (AAELFGIENETAGGERREGGAEGAAAAPGAGPVRSQGT) are disordered. Over residues 431–440 (GAAAAPGAGP) the composition is skewed to low complexity.

The protein belongs to the glutamyl-tRNA reductase family. In terms of assembly, homodimer.

It catalyses the reaction (S)-4-amino-5-oxopentanoate + tRNA(Glu) + NADP(+) = L-glutamyl-tRNA(Glu) + NADPH + H(+). The protein operates within porphyrin-containing compound metabolism; protoporphyrin-IX biosynthesis; 5-aminolevulinate from L-glutamyl-tRNA(Glu): step 1/2. Functionally, catalyzes the NADPH-dependent reduction of glutamyl-tRNA(Glu) to glutamate 1-semialdehyde (GSA). The protein is Glutamyl-tRNA reductase 2 of Anaeromyxobacter dehalogenans (strain 2CP-C).